Consider the following 706-residue polypeptide: Elongation factor G (706 aa).

The region spanning 12–288 is the tr-type G domain; sequence EKTRNIGIMA…GVTNYLPSPN (277 aa). GTP-binding positions include 21–28, 85–89, and 139–142; these read AHIDAGKT, DTPGH, and NKMD. The disordered stretch occupies residues 288-309; the sequence is NDVPAITGHHPQDKEEDITRHP. The span at 297 to 309 shows a compositional bias: basic and acidic residues; that stretch reads HPQDKEEDITRHP.

It belongs to the TRAFAC class translation factor GTPase superfamily. Classic translation factor GTPase family. EF-G/EF-2 subfamily.

It localises to the cytoplasm. Functionally, catalyzes the GTP-dependent ribosomal translocation step during translation elongation. During this step, the ribosome changes from the pre-translocational (PRE) to the post-translocational (POST) state as the newly formed A-site-bound peptidyl-tRNA and P-site-bound deacylated tRNA move to the P and E sites, respectively. Catalyzes the coordinated movement of the two tRNA molecules, the mRNA and conformational changes in the ribosome. This is Elongation factor G from Salinibacter ruber (strain DSM 13855 / M31).